Consider the following 155-residue polypeptide: Ciliary microtubule inner protein 2C (155 aa).

The protein belongs to the CIMIP2 family.

Its subcellular location is the cytoplasm. The protein localises to the cytoskeleton. The protein resides in the cilium axoneme. In terms of biological role, microtubule inner protein (MIP) part of the dynein-decorated doublet microtubules (DMTs) in cilia axoneme, which is required for motile cilia beating. The protein is Ciliary microtubule inner protein 2C (cimip2c) of Xenopus tropicalis (Western clawed frog).